The chain runs to 87 residues: Anaphase-promoting complex subunit 11 (87 aa).

An RING-type; atypical zinc finger spans residues 35 to 77 (CVDCKIPGDDCPPVWGVCNHAFHMHCILKWLNANELQQCPMCR).

The protein belongs to the RING-box family. As to quaternary structure, the APC/C is composed of at least 13 subunits that stay tightly associated throughout the cell cycle: anapc1, anapc2, anapc3, anapc4, anapc5, anapc6, anapc7, anapc8, anapc10, anapc11, cdc20, cdc26 and cdh1.

The protein localises to the nucleus. The protein operates within protein modification; protein ubiquitination. Its function is as follows. Component of the anaphase promoting complex/cyclosome (APC/C), a cell cycle-regulated E3 ubiquitin-protein ligase complex that controls progression through mitosis and the G1 phase of the cell cycle. The chain is Anaphase-promoting complex subunit 11 (anapc11) from Dictyostelium discoideum (Social amoeba).